Here is a 67-residue protein sequence, read N- to C-terminus: DNA-directed RNA polymerase subunit omega (67 aa).

This sequence belongs to the RNA polymerase subunit omega family. In terms of assembly, the RNAP catalytic core consists of 2 alpha, 1 beta, 1 beta' and 1 omega subunit. When a sigma factor is associated with the core the holoenzyme is formed, which can initiate transcription.

It carries out the reaction RNA(n) + a ribonucleoside 5'-triphosphate = RNA(n+1) + diphosphate. In terms of biological role, promotes RNA polymerase assembly. Latches the N- and C-terminal regions of the beta' subunit thereby facilitating its interaction with the beta and alpha subunits. The sequence is that of DNA-directed RNA polymerase subunit omega from Listeria monocytogenes serotype 4a (strain HCC23).